The following is a 318-amino-acid chain: HTH-type transcriptional regulatory protein TyrR (318 aa).

A Sigma-54 factor interaction; truncated domain is found at 15–239 (FIVQSEAMKS…LYNTLYRACS (225 aa)). ATP contacts are provided by residues 43-50 (GETGSGKD) and 101-110 (ANKGTVLLDG). Positions 292 to 312 (STRKLAQRLGVSHTAIANKLK) form a DNA-binding region, H-T-H motif.

As to quaternary structure, homodimer. In presence of tyrosine (or high concentrations of phenylalanine or tryptophan) and ATP, it self-associates to form a hexamer.

The protein resides in the cytoplasm. Its activity is regulated as follows. The DNA binding ability is drastically reduced in the presence of ATP. Tyrosine further reduces the binding affinity of TyrR in the presence of ATP. In terms of biological role, transcriptional regulator of the TyrR regulon, which includes a number of genes coding for proteins involved in the biosynthesis or transport of the three aromatic amino acids, phenylalanine, tyrosine and tryptophan. These three aromatic amino acids act as effectors which bind to the TyrR protein to form an active regulatory protein. Acts by binding specifically to TyrR boxes in the promoter region of the target genes. Can efficiently repress the transcription of the aroF promoter, but lacks the ability to function as a transcriptional activator. The polypeptide is HTH-type transcriptional regulatory protein TyrR (Haemophilus influenzae (strain ATCC 51907 / DSM 11121 / KW20 / Rd)).